We begin with the raw amino-acid sequence, 446 residues long: Chromosomal replication initiator protein DnaA (446 aa).

The interval 1-72 (MKNISDLWNQ…ADTIYDLTGE (72 aa)) is domain I, interacts with DnaA modulators. Residues 72–109 (EELSIKFVIPQNQNEEDFMPKSPIKKMSKEEPADFPQN) form a domain II region. The domain III, AAA+ region stretch occupies residues 110 to 326 (MLNPKYTFDT…GALIRVVAYS (217 aa)). Gly154, Gly156, Lys157, and Thr158 together coordinate ATP. Residues 327-446 (SLINKDINAD…QIKEIKEQLR (120 aa)) form a domain IV, binds dsDNA region.

Belongs to the DnaA family. As to quaternary structure, oligomerizes as a right-handed, spiral filament on DNA at oriC.

It is found in the cytoplasm. Plays an essential role in the initiation and regulation of chromosomal replication. ATP-DnaA binds to the origin of replication (oriC) to initiate formation of the DNA replication initiation complex once per cell cycle. Binds the DnaA box (a 9 base pair repeat at the origin) and separates the double-stranded (ds)DNA. Forms a right-handed helical filament on oriC DNA; dsDNA binds to the exterior of the filament while single-stranded (ss)DNA is stabiized in the filament's interior. The ATP-DnaA-oriC complex binds and stabilizes one strand of the AT-rich DNA unwinding element (DUE), permitting loading of DNA polymerase. After initiation quickly degrades to an ADP-DnaA complex that is not apt for DNA replication. Binds acidic phospholipids. This chain is Chromosomal replication initiator protein DnaA, found in Bacillus licheniformis (strain ATCC 14580 / DSM 13 / JCM 2505 / CCUG 7422 / NBRC 12200 / NCIMB 9375 / NCTC 10341 / NRRL NRS-1264 / Gibson 46).